A 307-amino-acid polypeptide reads, in one-letter code: Ventral anterior homeobox 2 (307 aa).

Disordered regions lie at residues 1–70 (MFDQ…DKLL), 155–175 (RTKQ…STSE), and 197–254 (PPPN…PSPR). Basic and acidic residues predominate over residues 25–38 (CRDRGRESKSRTEV). Positions 46-62 (SSTDTPGTSASTPTSSS) are enriched in low complexity. The homeobox DNA-binding region spans 103-162 (PKRTRTSFTAEQLYRLELEFQRCQYVVGRERTELARQLNLSETQVKVWFQNRRTKQKKDQ). Residues 159–170 (KKDQTKDTDKRS) are compositionally biased toward basic and acidic residues. The segment covering 202–249 (LLAHPHPGNGSLLGSPSVSTSSGVSSSTTPPGAGSGTFGLSLSSLSGT) has biased composition (low complexity).

The protein belongs to the EMX homeobox family. Expressed in the anterior neural keel and later in the preoptic area, optic stalk and ventral retina.

It localises to the nucleus. In terms of biological role, transcription factor that may function in dorsoventral specification of the forebrain. Required for closure of the choroid fissure and together with vax1 is required for optic nerve differentiation and to limit retinal development to the optic cup. This Danio rerio (Zebrafish) protein is Ventral anterior homeobox 2 (vax2).